The sequence spans 524 residues: Na(+)/H(+) antiporter NhaB (524 aa).

The next 13 membrane-spanning stretches (helical) occupy residues 23 to 43 (LAII…SPFV), 45 to 65 (GWML…CYPL), 98 to 118 (LLLI…LFIF), 136 to 156 (CVAS…AVVI), 203 to 223 (LMMH…VGEP), 239 to 259 (FFMR…LVCI), 304 to 324 (ALIG…VGLV), 325 to 345 (GLSV…HALG), 358 to 378 (LTVF…TPII), 392 to 412 (LFYL…VGTV), 420 to 440 (AFEL…AINT), 448 to 468 (ATPN…APLI), and 479 to 499 (ALPY…YLLV).

This sequence belongs to the NhaB Na(+)/H(+) (TC 2.A.34) antiporter family.

It is found in the cell inner membrane. The enzyme catalyses 2 Na(+)(in) + 3 H(+)(out) = 2 Na(+)(out) + 3 H(+)(in). Its function is as follows. Na(+)/H(+) antiporter that extrudes sodium in exchange for external protons. This chain is Na(+)/H(+) antiporter NhaB, found in Yersinia enterocolitica serotype O:8 / biotype 1B (strain NCTC 13174 / 8081).